The following is a 384-amino-acid chain: Terpene cyclase ascI (384 aa).

The first 25 residues, 1 to 25 (MPQLAGKLILAGLIPLGAWVLHGFA), serve as a signal peptide directing secretion. Residues 82–102 (LSLHAFMFAGQGVPLLVLNML) form a helical membrane-spanning segment. N109 carries an N-linked (GlcNAc...) asparagine glycan. 4 helical membrane passes run 119-139 (VFGI…YLFL), 164-184 (AVGF…SLPH), 194-214 (VLSV…AYFA), and 235-255 (GAVY…TFAI). N258 carries an N-linked (GlcNAc...) asparagine glycan. Transmembrane regions (helical) follow at residues 291 to 311 (WFLQ…AIGI) and 330 to 350 (IALR…ALSL). An N-linked (GlcNAc...) asparagine glycan is attached at N372.

This sequence belongs to the membrane-bound ascI terpene cyclase family.

It localises to the membrane. It carries out the reaction 16-hydroxy-ilicicolin A epoxide = ascofuranol. It participates in secondary metabolite biosynthesis; terpenoid biosynthesis. Epoxide hydrolase; part of the asc-2 gene cluster that mediates the biosynthesis of ascofuranone, a strong inhibitor of cyanide-insensitive alternative oxidases and a promising drug candidate against African trypanosomiasis. The first step in the pathway is performed by the non-reducing polyketide synthase ascC that produces orsellinic acid by condensing acetyl-CoA with 3 malonyl-CoA units. Orsellinic acid is then prenylated by the prenyltransferase ascA to yield ilicicolinic acid B. Ilicicolinic acid B is further reduced to ilicicolin B by the reductase ascB. The halogenase ascD then chlorinates ilicicolin B to produce ilicicolin A which is converted to ilicicolin A epoxide by the cytochrome P450 monooxygenase ascE that catalyzes stereoselective epoxidation of the terminal double bond of the prenyl group. Ilicicolin A epoxide is the last common precursor for the biosynthesis of ascofuranone and ascochlorin. The terpene cyclase ascF produces a monocyclic terpene, and the cyclization reaction is proposed to be initiated by protonation of the terminal epoxide of ilicicolin A epoxide to generate a monocyclic tertiarycation, which is followed by a series of hydride and methyl shifts with abstraction of proton, leading to the formation of the (14S,15R,19R)-trimethylcyclohexanone ring structure of ilicicolin C, which is finally reduced to ascochlorin by the dehydrogenase ascG. On the other hand, ilicicolin A epoxide is hydroxylated by the cytochrome P450 monooxygenase ascH, and the resultant product is cyclized by the terpene cyclase ascI to ascofuranol via protonation-initiated epoxide ring opening, which facilitates the 6-endo-tet cyclization to form the tetrahy-drofuran ring. Finally, ascofuranol is oxidized into ascofuranone by ascJ. This is Terpene cyclase ascI from Acremonium egyptiacum (Oospora egyptiaca).